The following is a 331-amino-acid chain: Septin homolog spn2 (331 aa).

One can recognise a Septin-type G domain in the interval 29-301 (RGFQFNVMVV…EKFRFKQLSS (273 aa)). The G1 motif stretch occupies residues 39 to 46 (GPSGSGKS). Residues 39-46 (GPSGSGKS), threonine 73, glycine 99, 179-187 (KSDSLTLEE), glycine 235, and arginine 250 each bind GTP. Positions 96 to 99 (DTPG) are G3 motif. A G4 motif region spans residues 178-181 (AKSD). Positions 311–331 (RMGSPAPVYPSEPHLHTATAQ) are disordered.

It belongs to the TRAFAC class TrmE-Era-EngA-EngB-Septin-like GTPase superfamily. Septin GTPase family. Component of the septin complex composed of two copies of each spn1, spn2, spn3 and spn4. Component of the sporulation-specific septin complex composed of at least spn2, spn5, spn6 and spn7.

The protein resides in the cytoplasm. The protein localises to the cell cortex. It localises to the forespore membrane. In terms of biological role, plays a role in the cell cycle. Involved in a late stage of septum formation leading to the separation of the daughter cells. Involved in the correct orientation of forespore membrane extension during sporulation. Binds phosphatidylinositol 4-phosphate. In Schizosaccharomyces pombe (strain 972 / ATCC 24843) (Fission yeast), this protein is Septin homolog spn2 (spn2).